Here is a 149-residue protein sequence, read N- to C-terminus: MDQKQLQALVEQISIRVFGKPFRHTAFFNPRLRTTGGRYMLQTHNIELNKKHYEQFGEEELIAIIKHELCHYHLHLEGKGYRHRDRDFRELLQKVGAPRYCRPLARNTKAPKTIYTYICTSCGLTYRRKRRINIDRYVCGRCRSKLKLS.

Residues leucine 6–lysine 147 form the SprT-like domain. Histidine 67 is a binding site for Zn(2+). Glutamate 68 is a catalytic residue. Histidine 71 contributes to the Zn(2+) binding site.

The protein belongs to the SprT family. Zn(2+) serves as cofactor.

Its subcellular location is the cytoplasm. In Geobacillus kaustophilus (strain HTA426), this protein is Protein SprT-like.